Consider the following 159-residue polypeptide: Putative esterase DR_2406 (159 aa).

Belongs to the thioesterase PaaI family.

The polypeptide is Putative esterase DR_2406 (Deinococcus radiodurans (strain ATCC 13939 / DSM 20539 / JCM 16871 / CCUG 27074 / LMG 4051 / NBRC 15346 / NCIMB 9279 / VKM B-1422 / R1)).